Consider the following 333-residue polypeptide: 4-hydroxy-3-methylbut-2-enyl diphosphate reductase (333 aa).

Cysteine 34 is a binding site for [4Fe-4S] cluster. (2E)-4-hydroxy-3-methylbut-2-enyl diphosphate is bound by residues histidine 63 and histidine 96. Dimethylallyl diphosphate-binding residues include histidine 63 and histidine 96. The isopentenyl diphosphate site is built by histidine 63 and histidine 96. Cysteine 118 provides a ligand contact to [4Fe-4S] cluster. Histidine 146 serves as a coordination point for (2E)-4-hydroxy-3-methylbut-2-enyl diphosphate. A dimethylallyl diphosphate-binding site is contributed by histidine 146. An isopentenyl diphosphate-binding site is contributed by histidine 146. Glutamate 148 (proton donor) is an active-site residue. Threonine 186 contacts (2E)-4-hydroxy-3-methylbut-2-enyl diphosphate. Cysteine 216 contacts [4Fe-4S] cluster. The (2E)-4-hydroxy-3-methylbut-2-enyl diphosphate site is built by serine 244, serine 245, asparagine 246, and serine 289. Dimethylallyl diphosphate contacts are provided by serine 244, serine 245, asparagine 246, and serine 289. Residues serine 244, serine 245, asparagine 246, and serine 289 each coordinate isopentenyl diphosphate.

The protein belongs to the IspH family. [4Fe-4S] cluster is required as a cofactor.

The catalysed reaction is isopentenyl diphosphate + 2 oxidized [2Fe-2S]-[ferredoxin] + H2O = (2E)-4-hydroxy-3-methylbut-2-enyl diphosphate + 2 reduced [2Fe-2S]-[ferredoxin] + 2 H(+). It catalyses the reaction dimethylallyl diphosphate + 2 oxidized [2Fe-2S]-[ferredoxin] + H2O = (2E)-4-hydroxy-3-methylbut-2-enyl diphosphate + 2 reduced [2Fe-2S]-[ferredoxin] + 2 H(+). It participates in isoprenoid biosynthesis; dimethylallyl diphosphate biosynthesis; dimethylallyl diphosphate from (2E)-4-hydroxy-3-methylbutenyl diphosphate: step 1/1. Its pathway is isoprenoid biosynthesis; isopentenyl diphosphate biosynthesis via DXP pathway; isopentenyl diphosphate from 1-deoxy-D-xylulose 5-phosphate: step 6/6. Functionally, catalyzes the conversion of 1-hydroxy-2-methyl-2-(E)-butenyl 4-diphosphate (HMBPP) into a mixture of isopentenyl diphosphate (IPP) and dimethylallyl diphosphate (DMAPP). Acts in the terminal step of the DOXP/MEP pathway for isoprenoid precursor biosynthesis. The sequence is that of 4-hydroxy-3-methylbut-2-enyl diphosphate reductase from Mycolicibacterium gilvum (strain PYR-GCK) (Mycobacterium gilvum (strain PYR-GCK)).